A 532-amino-acid chain; its full sequence is Phosphoenolpyruvate carboxykinase (ATP) (532 aa).

Residues R58, Y194, and K200 each coordinate substrate. Residues K200, H220, and 236 to 244 (GLSGTGKTT) contribute to the ATP site. Mn(2+) contacts are provided by K200 and H220. D257 contributes to the Mn(2+) binding site. ATP contacts are provided by residues E285, R322, 442 to 443 (RV), and T448. R322 is a substrate binding site.

It belongs to the phosphoenolpyruvate carboxykinase (ATP) family. Mn(2+) is required as a cofactor.

It localises to the cytoplasm. It carries out the reaction oxaloacetate + ATP = phosphoenolpyruvate + ADP + CO2. It functions in the pathway carbohydrate biosynthesis; gluconeogenesis. In terms of biological role, involved in the gluconeogenesis. Catalyzes the conversion of oxaloacetate (OAA) to phosphoenolpyruvate (PEP) through direct phosphoryl transfer between the nucleoside triphosphate and OAA. This chain is Phosphoenolpyruvate carboxykinase (ATP), found in Rubrobacter xylanophilus (strain DSM 9941 / JCM 11954 / NBRC 16129 / PRD-1).